Here is a 334-residue protein sequence, read N- to C-terminus: Probable tRNA pseudouridine synthase B (334 aa).

The active-site Nucleophile is aspartate 82. The PUA domain maps to 250–325 (LPKIWIKDSA…IAVDVEKVFM (76 aa)).

The protein belongs to the pseudouridine synthase TruB family. Type 2 subfamily.

The enzyme catalyses uridine(55) in tRNA = pseudouridine(55) in tRNA. In terms of biological role, could be responsible for synthesis of pseudouridine from uracil-55 in the psi GC loop of transfer RNAs. This Pyrococcus horikoshii (strain ATCC 700860 / DSM 12428 / JCM 9974 / NBRC 100139 / OT-3) protein is Probable tRNA pseudouridine synthase B.